Consider the following 249-residue polypeptide: MESTPPRFGLDCRNRNKKDVNIRKQKEILKVDKLKKLEIKKLEDQKKLKEQEEKHRLTLIRLANAPPQTNSINNNNNNNNNIKTNRPPLIYGEDKDKKSLFPEPQDYDVDEPTYETSFCVKLGPNGVFQHELRFTNANARENSDIQKAIELSLKQTDVVIVKNPNDDIENDFVVFNEQPDEREKELEHWELMDECSSSLVNFVTTPYNFSEIEFPRLASTCSTQMLKKNLNQNNPWLNSKSLIANISQK.

Positions 30-65 (KVDKLKKLEIKKLEDQKKLKEQEEKHRLTLIRLANA) form a coiled coil. The segment at 66 to 97 (PPQTNSINNNNNNNNNIKTNRPPLIYGEDKDK) is disordered.

This is an uncharacterized protein from Dictyostelium discoideum (Social amoeba).